We begin with the raw amino-acid sequence, 201 residues long: Probable chemoreceptor glutamine deamidase CheD 1 (201 aa).

This sequence belongs to the CheD family.

It carries out the reaction L-glutaminyl-[protein] + H2O = L-glutamyl-[protein] + NH4(+). Functionally, probably deamidates glutamine residues to glutamate on methyl-accepting chemotaxis receptors (MCPs), playing an important role in chemotaxis. This is Probable chemoreceptor glutamine deamidase CheD 1 from Geobacter sulfurreducens (strain ATCC 51573 / DSM 12127 / PCA).